The sequence spans 452 residues: UDP-N-acetylmuramate--L-alanine ligase (452 aa).

121 to 127 (GTHGKTT) is an ATP binding site.

Belongs to the MurCDEF family.

The protein localises to the cytoplasm. The enzyme catalyses UDP-N-acetyl-alpha-D-muramate + L-alanine + ATP = UDP-N-acetyl-alpha-D-muramoyl-L-alanine + ADP + phosphate + H(+). Its pathway is cell wall biogenesis; peptidoglycan biosynthesis. Functionally, cell wall formation. This is UDP-N-acetylmuramate--L-alanine ligase from Christiangramia forsetii (strain DSM 17595 / CGMCC 1.15422 / KT0803) (Gramella forsetii).